Here is a 36-residue protein sequence, read N- to C-terminus: uncharacterized protein (36 aa).

This is an uncharacterized protein from Haemophilus influenzae (strain ATCC 51907 / DSM 11121 / KW20 / Rd).